The sequence spans 545 residues: Chaperonin GroEL 1 (545 aa).

ATP contacts are provided by residues 30–33 (TLGP), lysine 51, 87–91 (DGTTT), glycine 415, and aspartate 496.

The protein belongs to the chaperonin (HSP60) family. As to quaternary structure, forms a cylinder of 14 subunits composed of two heptameric rings stacked back-to-back. Interacts with the co-chaperonin GroES.

It is found in the cytoplasm. It carries out the reaction ATP + H2O + a folded polypeptide = ADP + phosphate + an unfolded polypeptide.. Its function is as follows. Together with its co-chaperonin GroES, plays an essential role in assisting protein folding. The GroEL-GroES system forms a nano-cage that allows encapsulation of the non-native substrate proteins and provides a physical environment optimized to promote and accelerate protein folding. This chain is Chaperonin GroEL 1, found in Nitrobacter hamburgensis (strain DSM 10229 / NCIMB 13809 / X14).